We begin with the raw amino-acid sequence, 142 residues long: Transcription antitermination protein NusB (142 aa).

The protein belongs to the NusB family.

Involved in transcription antitermination. Required for transcription of ribosomal RNA (rRNA) genes. Binds specifically to the boxA antiterminator sequence of the ribosomal RNA (rrn) operons. The chain is Transcription antitermination protein NusB from Streptomyces coelicolor (strain ATCC BAA-471 / A3(2) / M145).